The following is a 189-amino-acid chain: MEKNESSAIEIAESSKERKGKAPLLAAAVGHDRAAGYKRGVSIFDLILRISAATAALAATIVMGTTEQTLPFFTQFFQFRAQYDDLPTFTFFVVGMAIVTGYLILSVPLSIVCIARPVAIGPRFLLIVCDTVTAVLATSAAGSSAAIVYLAHNGNSDANWLAICQQFNDFCQRVSGAVVAAFVAVVCSS.

The Cytoplasmic portion of the chain corresponds to 1-42 (MEKNESSAIEIAESSKERKGKAPLLAAAVGHDRAAGYKRGVS). Residues 43–63 (IFDLILRISAATAALAATIVM) form a helical membrane-spanning segment. Over 64 to 90 (GTTEQTLPFFTQFFQFRAQYDDLPTFT) the chain is Extracellular. The chain crosses the membrane as a helical span at residues 91–111 (FFVVGMAIVTGYLILSVPLSI). Over 112 to 130 (VCIARPVAIGPRFLLIVCD) the chain is Cytoplasmic. Residues 131–151 (TVTAVLATSAAGSSAAIVYLA) form a helical membrane-spanning segment. Residues 152 to 189 (HNGNSDANWLAICQQFNDFCQRVSGAVVAAFVAVVCSS) lie on the Extracellular side of the membrane.

It belongs to the Casparian strip membrane proteins (CASP) family. In terms of assembly, homodimer and heterodimers.

Its subcellular location is the cell membrane. Regulates membrane-cell wall junctions and localized cell wall deposition. Required for establishment of the Casparian strip membrane domain (CSD) and the subsequent formation of Casparian strips, a cell wall modification of the root endodermis that determines an apoplastic barrier between the intraorganismal apoplasm and the extraorganismal apoplasm and prevents lateral diffusion. The polypeptide is Casparian strip membrane protein 1 (Striga asiatica (Asiatic witchweed)).